The primary structure comprises 182 residues: ATP synthase subunit delta (182 aa).

The protein belongs to the ATPase delta chain family. As to quaternary structure, F-type ATPases have 2 components, F(1) - the catalytic core - and F(0) - the membrane proton channel. F(1) has five subunits: alpha(3), beta(3), gamma(1), delta(1), epsilon(1). CF(0) has four main subunits: a(1), b(1), b'(1) and c(10-14). The alpha and beta chains form an alternating ring which encloses part of the gamma chain. F(1) is attached to F(0) by a central stalk formed by the gamma and epsilon chains, while a peripheral stalk is formed by the delta, b and b' chains.

It is found in the cellular thylakoid membrane. F(1)F(0) ATP synthase produces ATP from ADP in the presence of a proton or sodium gradient. F-type ATPases consist of two structural domains, F(1) containing the extramembraneous catalytic core and F(0) containing the membrane proton channel, linked together by a central stalk and a peripheral stalk. During catalysis, ATP synthesis in the catalytic domain of F(1) is coupled via a rotary mechanism of the central stalk subunits to proton translocation. Its function is as follows. This protein is part of the stalk that links CF(0) to CF(1). It either transmits conformational changes from CF(0) to CF(1) or is implicated in proton conduction. The protein is ATP synthase subunit delta of Prochlorococcus marinus (strain NATL2A).